A 258-amino-acid polypeptide reads, in one-letter code: uncharacterized protein (258 aa).

The chain crosses the membrane as a helical span at residues 163 to 187 (GIVGAAGLMLMFADLNGIPGICLMG).

It is found in the membrane. This is an uncharacterized protein from Methanocaldococcus jannaschii (strain ATCC 43067 / DSM 2661 / JAL-1 / JCM 10045 / NBRC 100440) (Methanococcus jannaschii).